A 208-amino-acid chain; its full sequence is Putative 3-methyladenine DNA glycosylase (208 aa).

It belongs to the DNA glycosylase MPG family.

In Lactobacillus delbrueckii subsp. bulgaricus (strain ATCC 11842 / DSM 20081 / BCRC 10696 / JCM 1002 / NBRC 13953 / NCIMB 11778 / NCTC 12712 / WDCM 00102 / Lb 14), this protein is Putative 3-methyladenine DNA glycosylase.